A 596-amino-acid polypeptide reads, in one-letter code: Aspartate--tRNA(Asp/Asn) ligase (596 aa).

Glutamate 172 lines the L-aspartate pocket. The tract at residues 196–199 is aspartate; it reads QLFK. Arginine 218 lines the L-aspartate pocket. ATP contacts are provided by residues 218–220 and glutamine 227; that span reads RDE. Histidine 455 is a binding site for L-aspartate. Glutamate 489 is an ATP binding site. Arginine 496 contributes to the L-aspartate binding site. 541–544 is a binding site for ATP; sequence GLDR.

It belongs to the class-II aminoacyl-tRNA synthetase family. Type 1 subfamily. In terms of assembly, homodimer.

The protein localises to the cytoplasm. The enzyme catalyses tRNA(Asx) + L-aspartate + ATP = L-aspartyl-tRNA(Asx) + AMP + diphosphate. Its function is as follows. Aspartyl-tRNA synthetase with relaxed tRNA specificity since it is able to aspartylate not only its cognate tRNA(Asp) but also tRNA(Asn). Reaction proceeds in two steps: L-aspartate is first activated by ATP to form Asp-AMP and then transferred to the acceptor end of tRNA(Asp/Asn). This chain is Aspartate--tRNA(Asp/Asn) ligase, found in Bordetella avium (strain 197N).